Here is a 982-residue protein sequence, read N- to C-terminus: NACHT, LRR and PYD domains-containing protein 4C (982 aa).

The Pyrin domain maps to 1–93; the sequence is MASFFSDFGL…MERAGREIAG (93 aa). The 324-residue stretch at 148 to 471 folds into the NACHT domain; sequence HMVFLQGAAG…FYLLKSHMDH (324 aa). 154–161 is an ATP binding site; sequence GAAGIGKS. 7 LRR repeats span residues 594–617, 689–716, 746–773, 802–825, 827–844, 859–882, and 916–940; these read CSTL…HSYT, NQCL…VLSQ, SKML…LCHP, NKTL…VLCG, LSLP…YCLI, NQNL…LLCD, and CKTL…LFEA.

The protein belongs to the NLRP family.

May be involved in inflammation and recognition of cytosolic pathogen-associated molecular patterns (PAMPs) not intercepted by membrane-bound receptors. The chain is NACHT, LRR and PYD domains-containing protein 4C (Nlrp4c) from Mus musculus (Mouse).